The sequence spans 339 residues: Trace amine-associated receptor 2 (339 aa).

Residues 1–36 lie on the Extracellular side of the membrane; sequence MTSFEAQQETFDCSEYGNGSCPENERSLGVRAAMYS. N-linked (GlcNAc...) asparagine glycosylation is present at N18. 2 disulfides stabilise this stretch: C21–C185 and C104–C189. The helical transmembrane segment at 37-57 threads the bilayer; sequence LMAGAIFITIFGNLVMIISIS. Residues 58–67 lie on the Cytoplasmic side of the membrane; the sequence is YFKQLHTPTN. The helical transmembrane segment at 68-88 threads the bilayer; it reads LLILSMAVTDFLLGFTIMPYS. Residues 89–106 lie on the Extracellular side of the membrane; that stretch reads MVRSVENCWYFGLTFCKI. Residues 107 to 127 traverse the membrane as a helical segment; sequence HYSFDLMLSITSIFHLCSVAI. The Cytoplasmic segment spans residues 128–150; the sequence is DRFYAICHPLHYCTKMTIPVVKR. The helical transmembrane segment at 151-171 threads the bilayer; sequence LLLVCWSVPGAFAFGVVFSEA. At 172–195 the chain is on the extracellular side; the sequence is YADGIEGYDILVACSSSCPVMFNK. A helical transmembrane segment spans residues 196-216; the sequence is LWGTTLFVAGFFTPSSMMVGI. The Cytoplasmic segment spans residues 217 to 251; that stretch reads YGKIFAVSKKHARVIDNLPENQNNQMRKDKKAAKT. Residues 252-272 form a helical membrane-spanning segment; it reads LGIVMGVFLLCWFPCFFTILL. Residues 273–287 lie on the Extracellular side of the membrane; the sequence is DPFLNFSTPAILFDA. An N-linked (GlcNAc...) asparagine glycan is attached at N277. Residues 288-310 form a helical membrane-spanning segment; the sequence is LTWFGYFNSTCNPLIYGFFYPWF. The Cytoplasmic segment spans residues 311–339; that stretch reads RRALRYILLGKIFSSHFHNTNLFTQKETE.

This sequence belongs to the G-protein coupled receptor 1 family.

It is found in the cell membrane. Functionally, orphan olfactory receptor specific for trace amines. Trace amine compounds are enriched in animal body fluids and act on trace amine-associated receptors (TAARs) to elicit both intraspecific and interspecific innate behaviors. Ligand-binding causes a conformation change that triggers signaling via the G(s)-class of G-proteins which activate adenylate cyclase. May also be required to provide olfactory input into limbic brain areas to regulate emotional behaviors likely via modulation of the dopamine system. The sequence is that of Trace amine-associated receptor 2 (Taar2) from Rattus norvegicus (Rat).